The primary structure comprises 260 residues: Universal stress protein PHOS34 (260 aa).

A chloroplast-targeting transit peptide spans 1–33 (MNPDSDYPHLPNIKIHHPSSPRHSHHHSSSTPS). Residues 1–42 (MNPDSDYPHLPNIKIHHPSSPRHSHHHSSSTPSAATPTPTAG) are disordered. Basic residues predominate over residues 14–28 (KIHHPSSPRHSHHHS). Position 18 (Pro-18) interacts with ATP. Position 20 is a phosphoserine; by MAPK3 and MAPK6 (Ser-20). Low complexity predominate over residues 29-41 (SSTPSAATPTPTA). ATP is bound at residue Val-80. The disordered stretch occupies residues 92-118 (GPLPLQTPPPPSAATDPGAQPKPSQED). ATP is bound by residues 170–179 (GSRGFGAEKR) and 187–189 (SVS). The tract at residues 209-260 (RDGPAPPGNVGATREAIVTVKSRRDDDDDDDEDHEAKIAAAASDHHEHIKDE) is disordered. Ser-230 carries the phosphoserine modification. A compositionally biased stretch (basic and acidic residues) spans 251-260 (SDHHEHIKDE).

This sequence belongs to the universal stress protein A family. Post-translationally, phosphorylated by MAPK3 and MAPK6 after pathogenic elicitation (e.g. bacterial flg22, Phytophthora infestans zoospores and xylanase).

The protein localises to the plastid. The protein resides in the chloroplast. This Arabidopsis thaliana (Mouse-ear cress) protein is Universal stress protein PHOS34.